The primary structure comprises 691 residues: Ribonuclease J (691 aa).

Residues 1–89 (MTDNNHYENN…TRNYAKEELD (89 aa)) form a disordered region. The tract at residues 1-132 (MTDNNHYENN…KIQVEHLNPH (132 aa)) is loss of region decreases protein stability, still able to interact with RhpA, but has decreased RNase activity even on ssRNA. Residues 10–19 (NESNENSSEN) show a composition bias toward low complexity. Residues 41–57 (RENAQKNGESSHHEAPS) are compositionally biased toward basic and acidic residues. Positions 58-82 (HHKKEHRPNKKPNNHHKQKHAKTRN) are enriched in basic residues. 2 positions are modified to N6-acetyllysine: Lys134 and Lys140. His208, His210, Asp212, His213, His277, and Asp299 together coordinate Zn(2+). Lys323, Lys337, and Lys397 each carry N6-acetyllysine. 500–504 (HVSGH) is a substrate binding site. Lys511 bears the N6-acetyllysine mark. His526 serves as a coordination point for Zn(2+). Residues Lys547, Lys634, and Lys649 each carry the N6-acetyllysine modification.

Belongs to the metallo-beta-lactamase superfamily. RNA-metabolizing metallo-beta-lactamase-like family. Bacterial RNase J subfamily. Homodimer. Homotetramer; dimer of homodimers. Interacts with RNA helicase RphA, might be a member of a minimal RNA degradosome complex. Requires Zn(2+) as cofactor. Acetylated on nine lysine residues. Some of the residues are acetylated by multiple different mechanisms. RimL is partially responsible for the acetylation of Lys-323, Lys-397 and Lys-649. HPB8_1270 homolog is partially responsible for the acetylation of Lys-323, Lys-397, Lys-511 and Lys-649. Acetyl-phosphate-mediated non-enzymatic acetylation pathway takes part in the acetylation of Lys-134, Lys-323, Lys-397, Lys-511 and Lys-649. Acetylation of the remaining residues Lys-140, Lys-337, Lys-547 and Lys-634 occurs by a yet undetermined mechanism. Acetylation on a number of these residues is important for growth regulation and proper cell morphology.

The protein localises to the cytoplasm. Catalytic activity is regulated by the balance between homodimers and homotetramers, with homotetramers being the active forms of this enzyme. Acetylation allosterically regulates the homooligomerization state and hence the catalytic activity. Its function is as follows. An RNase that has 5'-3' exoribonuclease and endoribonuclease activity. Degrades 5'-monophosphorylated ssRNA and dsRNA, considerably more active on ssRNA. Association with RhpA significantly increases the dsRNase activity. Degrades RNA substrate with hairpin structures at both ends with low activity, but presence of RhpA significantly increases the activity on this substrate. Stimulates ATPase activity of RNA helicase RhpA. Involved in stabilization of mRNA but apparently not rRNA. In Helicobacter pylori (strain B128), this protein is Ribonuclease J.